Here is a 210-residue protein sequence, read N- to C-terminus: MNDSALDIITAHARDGARLRETFFAEQATMLRETALRIAACLARGGKILLCGNGGSAADAQHLAAEFVNRFLVDRPALPALALTTDTSALTAIANDMDFSQVFSRQVEALGRKGDILVGISTSGNSPNVLAALEAARRIGMLTLGFTGRGGGRMAALCHMLVDVANPSTPLIQEIHITAGHLLCQLTDYYLFENVAALAPYLHADTVNED.

Positions 38-202 (IAACLARGGK…ENVAALAPYL (165 aa)) constitute an SIS domain. Position 53-55 (53-55 (NGG)) interacts with substrate. Residues His62 and Glu66 each contribute to the Zn(2+) site. Substrate contacts are provided by residues Glu66, 95-96 (ND), 121-123 (STS), Ser126, and Gln173. Zn(2+) contacts are provided by Gln173 and His181.

It belongs to the SIS family. GmhA subfamily. Homotetramer. Requires Zn(2+) as cofactor.

The protein localises to the cytoplasm. The enzyme catalyses 2 D-sedoheptulose 7-phosphate = D-glycero-alpha-D-manno-heptose 7-phosphate + D-glycero-beta-D-manno-heptose 7-phosphate. The protein operates within carbohydrate biosynthesis; D-glycero-D-manno-heptose 7-phosphate biosynthesis; D-glycero-alpha-D-manno-heptose 7-phosphate and D-glycero-beta-D-manno-heptose 7-phosphate from sedoheptulose 7-phosphate: step 1/1. Catalyzes the isomerization of sedoheptulose 7-phosphate in D-glycero-D-manno-heptose 7-phosphate. This Desulfovibrio desulfuricans (strain ATCC 27774 / DSM 6949 / MB) protein is Phosphoheptose isomerase.